We begin with the raw amino-acid sequence, 179 residues long: MAVRKILKIGNPILRQTSEDVSESEIQTKDFKKLIRDMFETMRHADGVGLAAPQIGVLKKLVVVGQEDDNERYPGTPEVPNQIILNPEITPLSPPRDGFWEGCLSVPGMRGYVERPNKIRMKWRDENYVEHDEIIEGYRAIVLQHECDHLFGVLYVDRLKSTKLFGYNEDIDTAGKLLD.

The Fe cation site is built by cysteine 103 and histidine 145. Glutamate 146 is an active-site residue. Histidine 149 is a Fe cation binding site.

The protein belongs to the polypeptide deformylase family. The cofactor is Fe(2+).

It carries out the reaction N-terminal N-formyl-L-methionyl-[peptide] + H2O = N-terminal L-methionyl-[peptide] + formate. Removes the formyl group from the N-terminal Met of newly synthesized proteins. Requires at least a dipeptide for an efficient rate of reaction. N-terminal L-methionine is a prerequisite for activity but the enzyme has broad specificity at other positions. The chain is Peptide deformylase from Leptospira biflexa serovar Patoc (strain Patoc 1 / Ames).